A 723-amino-acid chain; its full sequence is DNA-binding protein RFX2 (723 aa).

A disordered region spans residues 1–46 (MQNSEGGADSPASVALRPSAAAPPVPASPQRVLVQAASSNPKGAQM). A compositionally biased stretch (low complexity) spans 10–20 (SPASVALRPSA). Residue S28 is modified to Phosphoserine. The segment at residues 199–274 (HLQWLLDNYE…YHYYGIRLKP (76 aa)) is a DNA-binding region (RFX-type winged-helix). Positions 292-332 (QQPMHQKPRYRPAQKTDSLGDSGSHSGLHSTPEQTMAVQSQ) are disordered. Positions 308–321 (DSLGDSGSHSGLHS) are enriched in low complexity. The span at 322-332 (TPEQTMAVQSQ) shows a compositional bias: polar residues. S416 bears the Phosphoserine mark. The segment at 688 to 723 (MGDEQRGSEAGPDARSLGEPLVKRERSDPNHSLQGI) is disordered.

Belongs to the RFX family. Homodimer; probably only forms homodimers in testis. Heterodimer; heterodimerizes with RFX1 and RFX3.

It localises to the nucleus. Its subcellular location is the cytoplasm. Its function is as follows. Transcription factor that acts as a key regulator of spermatogenesis. Acts by regulating expression of genes required for the haploid phase during spermiogenesis, such as genes required for cilium assembly and function. Recognizes and binds the X-box, a regulatory motif with DNA sequence 5'-GTNRCC(0-3N)RGYAAC-3' present on promoters. Probably activates transcription of the testis-specific histone gene H1-6. This is DNA-binding protein RFX2 (RFX2) from Homo sapiens (Human).